The sequence spans 610 residues: Transcription termination factor Rho (610 aa).

The disordered stretch occupies residues 117-227; sequence EVSRRERRGA…GDGAEAELRQ (111 aa). Basic and acidic residues predominate over residues 118–131; it reads VSRRERRGASREAD. Residues 178–187 show a composition bias toward polar residues; that stretch reads GVEQQSSSLQ. Residues 189–198 show a composition bias toward basic and acidic residues; that stretch reads RGDDDGEGRQ. The span at 199–214 shows a compositional bias: basic residues; that stretch reads GRRGRRFRDRDRRRRG. Basic and acidic residues predominate over residues 215–227; it reads ERSGDGAEAELRQ. A Rho RNA-BD domain is found at 231 to 309; that stretch reads VQPVAGILDV…VRLDSINGGS (79 aa). ATP contacts are provided by residues 352-357, 364-369, and R395; these read GKGQRA and KAGKTT.

It belongs to the Rho family. In terms of assembly, homohexamer. The homohexamer assembles into an open ring structure.

In terms of biological role, facilitates transcription termination by a mechanism that involves Rho binding to the nascent RNA, activation of Rho's RNA-dependent ATPase activity, and release of the mRNA from the DNA template. The sequence is that of Transcription termination factor Rho from Mycobacterium leprae (strain TN).